Here is a 156-residue protein sequence, read N- to C-terminus: Putative F-box protein R637 (156 aa).

The 48-residue stretch at 4–51 folds into the F-box domain; the sequence is HISSLLNEDCVRHIMCFLTDKEKGKFCLTCRDLLYLIKDVKFNDPVNK.

The chain is Putative F-box protein R637 from Acanthamoeba polyphaga mimivirus (APMV).